A 725-amino-acid polypeptide reads, in one-letter code: LPS-assembly protein LptD (725 aa).

The N-terminal stretch at 1–25 (MSLLSKLHLILYICLLLLPLRFVNA) is a signal peptide.

The protein belongs to the LptD family. In terms of assembly, component of the lipopolysaccharide transport and assembly complex. Interacts with LptE and LptA.

Its subcellular location is the cell outer membrane. Functionally, together with LptE, is involved in the assembly of lipopolysaccharide (LPS) at the surface of the outer membrane. In Nitrosomonas eutropha (strain DSM 101675 / C91 / Nm57), this protein is LPS-assembly protein LptD.